A 429-amino-acid polypeptide reads, in one-letter code: Glutamate-1-semialdehyde 2,1-aminomutase 2 (429 aa).

K268 carries the N6-(pyridoxal phosphate)lysine modification.

Belongs to the class-III pyridoxal-phosphate-dependent aminotransferase family. HemL subfamily. Homodimer. Pyridoxal 5'-phosphate is required as a cofactor.

It is found in the cytoplasm. It carries out the reaction (S)-4-amino-5-oxopentanoate = 5-aminolevulinate. It participates in porphyrin-containing compound metabolism; protoporphyrin-IX biosynthesis; 5-aminolevulinate from L-glutamyl-tRNA(Glu): step 2/2. The sequence is that of Glutamate-1-semialdehyde 2,1-aminomutase 2 from Staphylococcus aureus (strain MSSA476).